The sequence spans 264 residues: Gap junction beta-1 protein (264 aa).

Over 1 to 22 (MNWAGLYAILSGVNRHSTSIGR) the chain is Cytoplasmic. Residues 23–45 (IWLSVVFIFRIMVLVAAAESVWG) form a helical membrane-spanning segment. At 46-75 (DEKSAFTCNTQQPGCNSVCYDHFFPISHIR) the chain is on the extracellular side. The helical transmembrane segment at 76-98 (LWALQLIIVSTPALLVAMHVAHL) threads the bilayer. At 99-130 (QHQEKKELRLSRHVKDQELAEVKKHKVKISGT) the chain is on the cytoplasmic side. The chain crosses the membrane as a helical span at residues 131-153 (LWWTYISSVFFRIIFEAAFMYIF). The Extracellular portion of the chain corresponds to 154-191 (YLIYPGYSMIRLLKCDAYPCPNTVDCFVSRPTEKTIFT). The helical transmembrane segment at 192–214 (VFMLVASGVCIVLNVAEVFFLIA) threads the bilayer. The Cytoplasmic segment spans residues 215–264 (QACTRRARRHRDSGSISKEHQQNEMNLLITGGSIIKRSAGQEKGDHCSTS).

Belongs to the connexin family. Beta-type (group I) subfamily. A connexon is composed of a hexamer of connexins. In terms of tissue distribution, lung, liver, intestines, stomach and kidney.

Its subcellular location is the cell membrane. It localises to the cell junction. The protein resides in the gap junction. In terms of biological role, one gap junction consists of a cluster of closely packed pairs of transmembrane channels, the connexons, through which materials of low MW diffuse from one cell to a neighboring cell. The protein is Gap junction beta-1 protein (gjb1) of Xenopus laevis (African clawed frog).